Here is a 141-residue protein sequence, read N- to C-terminus: Cystatin (141 aa).

The first 26 residues, 1 to 26 (MVHSQLPVVALLRLLCALLLLPSATM), serve as a signal peptide directing secretion. The Cystatin domain maps to 29–129 (GGLSPRSVTD…CRFQVWSRPW (101 aa)). The Secondary area of contact signature appears at 73–77 (QVVAG). 2 cysteine pairs are disulfide-bonded: C91–C107 and C120–C140.

Belongs to the cystatin family. As to expression, expressed at a low level by the venom gland (at protein level).

The protein localises to the secreted. Inhibits various C1 cysteine proteases including cathepsin L, papain and cathepsin B. This protein has no toxic activity and its function in the venom is unknown. It may play a role as a housekeeping or regulatory protein. This chain is Cystatin, found in Notechis scutatus scutatus (Mainland tiger snake).